The following is a 159-amino-acid chain: MIDIGLSKMALIGAVALIVIGPEKLPRVARTVGTLLGKAQRYVADVKAEVNRSMELDELRKMKDTVENAARDVEQTIHTSASDFQKDMEHSLGDASATGSTYGVDQGLSTVVPAYKHPAKNWRLKRGAMPQWYKARAGVRTRVQSGAARVARFRPQKFH.

A helical membrane pass occupies residues 1 to 21 (MIDIGLSKMALIGAVALIVIG).

This sequence belongs to the TatB family. As to quaternary structure, the Tat system comprises two distinct complexes: a TatABC complex, containing multiple copies of TatA, TatB and TatC subunits, and a separate TatA complex, containing only TatA subunits. Substrates initially bind to the TatABC complex, which probably triggers association of the separate TatA complex to form the active translocon.

The protein localises to the cell inner membrane. Its function is as follows. Part of the twin-arginine translocation (Tat) system that transports large folded proteins containing a characteristic twin-arginine motif in their signal peptide across membranes. Together with TatC, TatB is part of a receptor directly interacting with Tat signal peptides. TatB may form an oligomeric binding site that transiently accommodates folded Tat precursor proteins before their translocation. This Acidovorax sp. (strain JS42) protein is Sec-independent protein translocase protein TatB.